Here is a 102-residue protein sequence, read N- to C-terminus: MFDPSKLSEMLTQFQDKAKEMEEKSHNTSFTAKSGGGLVSVSMSGAGELLDVSIDDSLLEDKESLQILLISAINDVYKSVEENKKSMTLGMLGGMAPFPFGS.

This sequence belongs to the YbaB/EbfC family. As to quaternary structure, homodimer.

The protein localises to the cytoplasm. Its subcellular location is the nucleoid. In terms of biological role, binds to DNA and alters its conformation. May be involved in regulation of gene expression, nucleoid organization and DNA protection. This chain is Nucleoid-associated protein WS1681, found in Wolinella succinogenes (strain ATCC 29543 / DSM 1740 / CCUG 13145 / JCM 31913 / LMG 7466 / NCTC 11488 / FDC 602W) (Vibrio succinogenes).